Here is a 36-residue protein sequence, read N- to C-terminus: Peroxiredoxin-4 (36 aa).

This sequence belongs to the peroxiredoxin family. AhpC/Prx1 subfamily. In terms of assembly, homodimer; disulfide-linked, upon oxidation. In terms of tissue distribution, venom gland.

The protein localises to the secreted. The enzyme catalyses a hydroperoxide + [thioredoxin]-dithiol = an alcohol + [thioredoxin]-disulfide + H2O. Its function is as follows. Venom peroxiredoxin enzyme that may play a role as part of a redox pathway leading to the structural/functional diversification of toxins through a disulfide bond engineering mechanism. The polypeptide is Peroxiredoxin-4 (Crotalus atrox (Western diamondback rattlesnake)).